The following is a 241-amino-acid chain: Large ribosomal subunit protein uL2 (241 aa).

Residues Ala-200–Arg-241 are disordered.

This sequence belongs to the universal ribosomal protein uL2 family. In terms of assembly, part of the 50S ribosomal subunit. Forms a bridge to the 30S subunit in the 70S ribosome.

In terms of biological role, one of the primary rRNA binding proteins. Required for association of the 30S and 50S subunits to form the 70S ribosome, for tRNA binding and peptide bond formation. It has been suggested to have peptidyltransferase activity; this is somewhat controversial. Makes several contacts with the 16S rRNA in the 70S ribosome. The sequence is that of Large ribosomal subunit protein uL2 from Methanosphaera stadtmanae (strain ATCC 43021 / DSM 3091 / JCM 11832 / MCB-3).